The primary structure comprises 298 residues: Inosose dehydratase (298 aa).

Belongs to the IolE/MocC family. Glutathione serves as cofactor. The cofactor is Co(2+). It depends on Mn(2+) as a cofactor.

The catalysed reaction is scyllo-inosose = 3D-3,5/4-trihydroxycyclohexane-1,2-dione + H2O. It participates in polyol metabolism; myo-inositol degradation into acetyl-CoA; acetyl-CoA from myo-inositol: step 2/7. In terms of biological role, catalyzes the dehydration of inosose (2-keto-myo-inositol, 2KMI or 2,4,6/3,5-pentahydroxycyclohexanone) to 3D-(3,5/4)-trihydroxycyclohexane-1,2-dione (D-2,3-diketo-4-deoxy-epi-inositol). This is Inosose dehydratase from Clostridium tetani (strain Massachusetts / E88).